A 291-amino-acid polypeptide reads, in one-letter code: Small ribosomal subunit biogenesis GTPase RsgA (291 aa).

One can recognise a CP-type G domain in the interval 63–221 (KNELKRPPVS…IADTPGFSAL (159 aa)). Residues 112 to 115 (TKKD) and 164 to 172 (GQSGVGKST) contribute to the GTP site. 4 residues coordinate Zn(2+): Cys245, Cys250, His252, and Cys258.

It belongs to the TRAFAC class YlqF/YawG GTPase family. RsgA subfamily. In terms of assembly, monomer. Associates with 30S ribosomal subunit, binds 16S rRNA. The cofactor is Zn(2+).

The protein localises to the cytoplasm. Functionally, one of several proteins that assist in the late maturation steps of the functional core of the 30S ribosomal subunit. Helps release RbfA from mature subunits. May play a role in the assembly of ribosomal proteins into the subunit. Circularly permuted GTPase that catalyzes slow GTP hydrolysis, GTPase activity is stimulated by the 30S ribosomal subunit. This chain is Small ribosomal subunit biogenesis GTPase RsgA, found in Staphylococcus aureus (strain Mu50 / ATCC 700699).